We begin with the raw amino-acid sequence, 259 residues long: Phosphate import ATP-binding protein PstB (259 aa).

An ABC transporter domain is found at 6–254 (SKNESVVFDV…PKDKRTEDYI (249 aa)). ATP is bound at residue 45-52 (GPSGCGKS).

The protein belongs to the ABC transporter superfamily. Phosphate importer (TC 3.A.1.7) family. In terms of assembly, the complex is composed of two ATP-binding proteins (PstB), two transmembrane proteins (PstC and PstA) and a solute-binding protein (PstS).

It is found in the cell membrane. The catalysed reaction is phosphate(out) + ATP + H2O = ADP + 2 phosphate(in) + H(+). In terms of biological role, part of the ABC transporter complex PstSACB involved in phosphate import. Responsible for energy coupling to the transport system. The polypeptide is Phosphate import ATP-binding protein PstB (Desulfitobacterium hafniense (strain Y51)).